We begin with the raw amino-acid sequence, 248 residues long: Triosephosphate isomerase (248 aa).

9–11 (NWK) serves as a coordination point for substrate. H92 acts as the Electrophile in catalysis. E164 serves as the catalytic Proton acceptor. Substrate contacts are provided by residues G170, S210, and 231–232 (GG).

It belongs to the triosephosphate isomerase family. Homodimer.

It is found in the cytoplasm. It carries out the reaction D-glyceraldehyde 3-phosphate = dihydroxyacetone phosphate. The protein operates within carbohydrate biosynthesis; gluconeogenesis. Its pathway is carbohydrate degradation; glycolysis; D-glyceraldehyde 3-phosphate from glycerone phosphate: step 1/1. Its function is as follows. Involved in the gluconeogenesis. Catalyzes stereospecifically the conversion of dihydroxyacetone phosphate (DHAP) to D-glyceraldehyde-3-phosphate (G3P). The protein is Triosephosphate isomerase of Mycoplasma capricolum subsp. capricolum (strain California kid / ATCC 27343 / NCTC 10154).